The following is a 437-amino-acid chain: MLTAFARAFKTPDLRKKLLFTLGIIVVYRLGTHIPIPGVDYKNVQECVDQASGNQGLFGLVNMFSGGALLQITVFALGIMPYITASIILQLLTVVIPRLEALKKEGQAGTAKITQYTRYLTVALAILQGTGLVATARSGALFSGCTVAGQIVPDQAIFTTVVMVICMTAGTCVVMWLGELITDRGIGNGMSILMFISIAATFPSALWAIKKQGELADGWIEFGTVILVGLVMVGLVVFVEQAQRRIPVQYAKRMIGRRSYGGTSTYIPLKVNQAGVIPVIFASSLLYIPALIVQFSNSTAGWATWITKNLADTAATPHIILYFFLIVFFAFFYVAISFNPEEVADNMKKYGGFIPGIRAGRPTAEYLSYVLNRITWPGSLYLGLIALVPTMALAGFGANQNFPFGGTSILIIVGVGLETVKQIESQLQQRNYEGFLR.

The next 10 membrane-spanning stretches (helical) occupy residues 19–39 (LFTL…IPGV), 69–89 (LLQI…SIIL), 122–142 (VALA…GALF), 157–177 (IFTT…VMWL), 189–209 (GMSI…LWAI), 219–239 (WIEF…VVFV), 275–295 (GVIP…IVQF), 318–338 (HIIL…AISF), 378–398 (GSLY…GFGA), and 400–420 (QNFP…LETV).

Belongs to the SecY/SEC61-alpha family. Component of the Sec protein translocase complex. Heterotrimer consisting of SecY, SecE and SecG subunits. The heterotrimers can form oligomers, although 1 heterotrimer is thought to be able to translocate proteins. Interacts with the ribosome. Interacts with SecDF, and other proteins may be involved. Interacts with SecA.

It localises to the cell membrane. Its function is as follows. The central subunit of the protein translocation channel SecYEG. Consists of two halves formed by TMs 1-5 and 6-10. These two domains form a lateral gate at the front which open onto the bilayer between TMs 2 and 7, and are clamped together by SecE at the back. The channel is closed by both a pore ring composed of hydrophobic SecY resides and a short helix (helix 2A) on the extracellular side of the membrane which forms a plug. The plug probably moves laterally to allow the channel to open. The ring and the pore may move independently. This Streptomyces coelicolor (strain ATCC BAA-471 / A3(2) / M145) protein is Protein translocase subunit SecY.